Here is a 129-residue protein sequence, read N- to C-terminus: MKYFVVALALVAAFACIAESKPAESEHELAEVEEENELADLEDAVWLEHLADLSDLEEARGFFGNTWKKIKGKADKIMLKKAVKIMVKKEGISKEEAQAKVDAMSKKQIRLYLLKYYGKKALQKASEKL.

Residues Met1–Ser20 form the signal peptide. Residues Lys21–Arg60 constitute a propeptide that is removed on maturation. The Processing quadruplet motif signature appears at Glu57–Arg60.

This sequence belongs to the cationic peptide 06 (cytoinsectotoxin) family. In terms of processing, cleavage of the propeptide depends on the processing quadruplet motif (XXXR, with at least one of X being E). As to expression, expressed by the venom gland.

The protein localises to the secreted. Its function is as follows. Insecticidal, cytolytic and antimicrobial peptide. Has insecticidal activity against the flesh fly S.carnaria, and against the cockroach N.cinerea. Has insecticidal activity against D.melanogaster. Has hemolytic activity against human erythrocytes (EC(50)=6 uM). Has cytolytic activity against insect Sf9 cells (EC(50)=1 uM) and human leukocytes (EC(50)=3 uM). Has antibacterial activity against the Gram-positive bacteria A.globiformis VKM Ac-1112 (MIC=0.5 uM), and B.subtilis VKM B-501 (MIC=0.6-0.9 uM), and against the Gram-negative bacteria E.coli C600 (MIC=0.5 uM), E.coli DH5alpha (MIC=0.9 uM), E.coli MH1 (MIC=0.5 uM), P.aeruginosa PAO1 (MIC=1.9 uM), and P.fluorescens VKM B-894 (MIC=3.8 uM). Lacks antimicrobial activity against the Gram-positive bacteria M.luteus and S.aureus, and against the Gram-negative bacterium S.marcescens. Forms voltage-dependent, ion-permeable channels in membranes. At high concentration causes cell membrane lysis. In Lachesana tarabaevi (Spider), this protein is M-zodatoxin-Lt8a (cit 1-1).